Reading from the N-terminus, the 378-residue chain is 4-hydroxy-3-methylbut-2-en-1-yl diphosphate synthase (flavodoxin) (378 aa).

Positions 268, 271, 303, and 310 each coordinate [4Fe-4S] cluster. The interval 359–378 (AEREKEKEKEKEKEKETQEQ) is disordered.

It belongs to the IspG family. It depends on [4Fe-4S] cluster as a cofactor.

The catalysed reaction is (2E)-4-hydroxy-3-methylbut-2-enyl diphosphate + oxidized [flavodoxin] + H2O + 2 H(+) = 2-C-methyl-D-erythritol 2,4-cyclic diphosphate + reduced [flavodoxin]. Its pathway is isoprenoid biosynthesis; isopentenyl diphosphate biosynthesis via DXP pathway; isopentenyl diphosphate from 1-deoxy-D-xylulose 5-phosphate: step 5/6. Functionally, converts 2C-methyl-D-erythritol 2,4-cyclodiphosphate (ME-2,4cPP) into 1-hydroxy-2-methyl-2-(E)-butenyl 4-diphosphate. The protein is 4-hydroxy-3-methylbut-2-en-1-yl diphosphate synthase (flavodoxin) of Bacillus cereus (strain ZK / E33L).